The chain runs to 1229 residues: Membrane-anchored lipid-binding protein SIP3 (1229 aa).

Residues 1-1066 (MSVHGRDPKK…AEKFSRINRM (1066 aa)) lie on the Cytoplasmic side of the membrane. A PH domain is found at 309 to 423 (SPEKSGWLYM…WLIAFEATKK (115 aa)). The 206-residue stretch at 771–976 (EYSITYNHEY…VLRYYLEKIG (206 aa)) folds into the VASt domain. Residues 1067–1087 (MVVGLLASIMINILLSEKASV) traverse the membrane as a helical segment. Topologically, residues 1088-1229 (PYWSIKRAEK…ELEKLRPPIT (142 aa)) are lumenal. Asn-1206 is a glycosylation site (N-linked (GlcNAc...) asparagine).

It belongs to the SIP3 family. Interacts with SNF1.

It is found in the endoplasmic reticulum membrane. Its function is as follows. May be involved in sterol transfer between intracellular membranes. The chain is Membrane-anchored lipid-binding protein SIP3 from Saccharomyces cerevisiae (strain ATCC 204508 / S288c) (Baker's yeast).